Here is a 274-residue protein sequence, read N- to C-terminus: Type II restriction enzyme HgiBI (274 aa).

Belongs to the TdeIII type II restriction endonuclease family.

It carries out the reaction Endonucleolytic cleavage of DNA to give specific double-stranded fragments with terminal 5'-phosphates.. Its function is as follows. A P subtype restriction enzyme that recognizes the double-stranded sequence 5'-GGWCC-3' and cleaves after G-1. This system is less active than isoschizomeric RM.HgiEI. The chain is Type II restriction enzyme HgiBI from Herpetosiphon aurantiacus (Herpetosiphon giganteus).